Consider the following 492-residue polypeptide: GDP-fucose protein O-fucosyltransferase 4 (492 aa).

The Cytoplasmic segment spans residues 1–7; that stretch reads MAAGPIR. Residues 8–24 form a helical; Signal-anchor for type II membrane protein membrane-spanning segment; that stretch reads VVLVLLGVLSVCAASGH. Topologically, residues 25–492 are lumenal; the sequence is GSVAEREAGG…HEIFMKRQHL (468 aa). The N-linked (GlcNAc...) asparagine glycan is linked to N166. The cysteines at positions 389 and 392 are disulfide-linked. N443 is a glycosylation site (N-linked (GlcNAc...) asparagine).

This sequence belongs to the glycosyltransferase 10 family.

It localises to the endoplasmic reticulum membrane. It catalyses the reaction L-threonyl-[protein] + GDP-beta-L-fucose = 3-O-(alpha-L-fucosyl)-L-threonyl-[protein] + GDP + H(+). The enzyme catalyses L-seryl-[protein] + GDP-beta-L-fucose = 3-O-(alpha-L-fucosyl)-L-seryl-[protein] + GDP + H(+). It participates in protein modification; protein glycosylation. Its function is as follows. Protein O-fucosyltransferase that specifically catalyzes O-fucosylation of serine or threonine residues in EMI domains of target proteins, such as MMRN1, MMRN2 and EMID1. Attaches fucose through an O-glycosidic linkage. O-fucosylation of EMI domain-containing proteins may be required for facilitating protein folding and secretion. Also shows minor alpha-(1,3)-fucosyltransferase activity toward activity toward biantennary N-glycan acceptors. However, this was tested with a library of synthetic substrates and this activity is unsure in vivo. The polypeptide is GDP-fucose protein O-fucosyltransferase 4 (Homo sapiens (Human)).